Consider the following 465-residue polypeptide: Macrophage metalloelastase (465 aa).

The signal sequence occupies residues 1–21 (MKFLLVLVLLVSLQVSACGAA). Positions 22-101 (PMNESEFAEW…DVQHLRAVPQ (80 aa)) are cleaved as a propeptide — activation peptide. The Cysteine switch signature appears at 86–93 (SRCGVPDV). A Zn(2+)-binding site is contributed by Cys-88. Ca(2+) is bound by residues Asp-120 and Asp-154. Zn(2+)-binding residues include His-164 and Asp-166. Residues Asp-171, Gly-172, Gly-174, and Thr-176 each contribute to the Ca(2+) site. His-179 contributes to the Zn(2+) binding site. Gly-186 and Asp-190 together coordinate Ca(2+). Position 192 (His-192) interacts with Zn(2+). Residues Asp-194, Glu-195, and Glu-197 each contribute to the Ca(2+) site. Zn(2+) is bound at residue His-214. Residue Glu-215 is part of the active site. The Zn(2+) site is built by His-218 and His-224. A disulfide bridge links Cys-278 with Cys-465. 4 Hemopexin repeats span residues 281–324 (SLSF…WPTI), 325–371 (PSGI…GFPA), 373–421 (VKKI…FPGI), and 422–465 (RPKI…WFGC). Asp-285 provides a ligand contact to Ca(2+). The N-linked (GlcNAc...) asparagine glycan is linked to Asn-313. Positions 377 and 426 each coordinate Ca(2+).

Belongs to the peptidase M10A family. It depends on Ca(2+) as a cofactor. Zn(2+) serves as cofactor.

Its subcellular location is the secreted. It is found in the extracellular space. The protein resides in the extracellular matrix. It catalyses the reaction Hydrolysis of soluble and insoluble elastin. Specific cleavages are also produced at 14-Ala-|-Leu-15 and 16-Tyr-|-Leu-17 in the B chain of insulin.. Functionally, may be involved in tissue injury and remodeling. Has significant elastolytic activity. Can accept large and small amino acids at the P1' site, but has a preference for leucine. Aromatic or hydrophobic residues are preferred at the P1 site, with small hydrophobic residues (preferably alanine) occupying P3. The sequence is that of Macrophage metalloelastase (Mmp12) from Rattus norvegicus (Rat).